Consider the following 1232-residue polypeptide: Dynactin subunit 1 (1232 aa).

In terms of domain architecture, CAP-Gly spans 31 to 73 (GATLFATGKWVGVILDDSKGKNDGTVQGRRYFTCEENHGIFVR). Disordered stretches follow at residues 82–183 (DGAD…AQVK) and 339–358 (SASE…KKNT). Residues 86 to 95 (TTSPETPEPT) are compositionally biased toward low complexity. Residues 108-117 (PKSSKLPTRP) are compositionally biased toward polar residues. A compositionally biased stretch (low complexity) spans 118 to 130 (SSSAASSGTASAS). A compositionally biased stretch (polar residues) spans 133–144 (EISSSEPSTPAQ). Positions 146-163 (PLAAPIIPSPSSAITSPV) are enriched in low complexity. Coiled-coil stretches lie at residues 170–505 (GPSK…KEQQ), 908–1005 (ETVI…RTIE), 1046–1071 (LLLQ…LKAH), and 1136–1166 (AAQL…ETVS). Residues 172–183 (SKEEENLRAQVK) are compositionally biased toward basic and acidic residues.

Belongs to the dynactin 150 kDa subunit family. As to quaternary structure, monomer and homodimer. Subunit of dynactin, a multiprotein complex part of a tripartite complex with dynein and a adapter, such as BICDL1, BICD2 or HOOK3. The dynactin complex is built around ACTR1A/ACTB filament and consists of an actin-related filament composed of a shoulder domain, a pointed end and a barbed end. Its length is defined by its flexible shoulder domain. The soulder is composed of 2 DCTN1 subunits, 4 DCTN2 and 2 DCTN3. DCTN1/p150(glued) binds directly to microtubules and to cytoplasmic dynein.

It is found in the cytoplasm. It localises to the cytoskeleton. Its subcellular location is the microtubule organizing center. The protein resides in the centrosome. The protein localises to the centriole. It is found in the spindle. It localises to the cell cortex. In terms of biological role, part of the dynactin complex that activates the molecular motor dynein for ultra-processive transport along microtubules. Plays a key role in dynein-mediated retrograde transport of vesicles and organelles along microtubules by recruiting and tethering dynein to microtubules. Binds to both dynein and microtubules providing a link between specific cargos, microtubules and dynein. Essential for targeting dynein to microtubule plus ends, recruiting dynein to membranous cargos and enhancing dynein processivity (the ability to move along a microtubule for a long distance without falling off the track). Can also act as a brake to slow the dynein motor during motility along the microtubule. Can regulate microtubule stability by promoting microtubule formation, nucleation and polymerization and by inhibiting microtubule catastrophe in neurons. Inhibits microtubule catastrophe by binding both to microtubules and to tubulin, leading to enhanced microtubule stability along the axon. Plays a role in metaphase spindle orientation. Plays a role in centriole cohesion and subdistal appendage organization and function. Its recruitment to the centriole in a KIF3A-dependent manner is essential for the maintenance of centriole cohesion and the formation of subdistal appendage. Also required for microtubule anchoring at the mother centriole. Plays a role in primary cilia formation. This Xenopus laevis (African clawed frog) protein is Dynactin subunit 1 (dctn1).